We begin with the raw amino-acid sequence, 410 residues long: Argininosuccinate synthase (410 aa).

ATP contacts are provided by residues 10–18 and Ala37; that span reads AYSGGLDTS. The L-citrulline site is built by Tyr90 and Ser95. Gly120 provides a ligand contact to ATP. Positions 122, 126, and 127 each coordinate L-aspartate. Residue Asn126 coordinates L-citrulline. The L-citrulline site is built by Arg130, Ser182, Ser191, Glu267, and Tyr279.

This sequence belongs to the argininosuccinate synthase family. Type 1 subfamily. As to quaternary structure, homotetramer.

The protein resides in the cytoplasm. The enzyme catalyses L-citrulline + L-aspartate + ATP = 2-(N(omega)-L-arginino)succinate + AMP + diphosphate + H(+). The protein operates within amino-acid biosynthesis; L-arginine biosynthesis; L-arginine from L-ornithine and carbamoyl phosphate: step 2/3. This is Argininosuccinate synthase from Polynucleobacter necessarius subsp. necessarius (strain STIR1).